The primary structure comprises 260 residues: Trans-aconitate 2-methyltransferase (260 aa).

Belongs to the methyltransferase superfamily. Tam family.

It localises to the cytoplasm. It catalyses the reaction trans-aconitate + S-adenosyl-L-methionine = (E)-3-(methoxycarbonyl)pent-2-enedioate + S-adenosyl-L-homocysteine. In terms of biological role, catalyzes the S-adenosylmethionine monomethyl esterification of trans-aconitate. The polypeptide is Trans-aconitate 2-methyltransferase (Methylobacterium radiotolerans (strain ATCC 27329 / DSM 1819 / JCM 2831 / NBRC 15690 / NCIMB 10815 / 0-1)).